Here is a 423-residue protein sequence, read N- to C-terminus: Haloacid dehalogenase-like hydrolase domain-containing 5 (423 aa).

The N-terminal stretch at 1-23 (MAAWGCVAALGAARGLCWRAARA) is a signal peptide.

This sequence belongs to the HAD-like hydrolase superfamily. In terms of tissue distribution, widely expressed.

The sequence is that of Haloacid dehalogenase-like hydrolase domain-containing 5 from Homo sapiens (Human).